The sequence spans 95 residues: Aspartyl/glutamyl-tRNA(Asn/Gln) amidotransferase subunit C (95 aa).

The protein belongs to the GatC family. Heterotrimer of A, B and C subunits.

It catalyses the reaction L-glutamyl-tRNA(Gln) + L-glutamine + ATP + H2O = L-glutaminyl-tRNA(Gln) + L-glutamate + ADP + phosphate + H(+). It carries out the reaction L-aspartyl-tRNA(Asn) + L-glutamine + ATP + H2O = L-asparaginyl-tRNA(Asn) + L-glutamate + ADP + phosphate + 2 H(+). Its function is as follows. Allows the formation of correctly charged Asn-tRNA(Asn) or Gln-tRNA(Gln) through the transamidation of misacylated Asp-tRNA(Asn) or Glu-tRNA(Gln) in organisms which lack either or both of asparaginyl-tRNA or glutaminyl-tRNA synthetases. The reaction takes place in the presence of glutamine and ATP through an activated phospho-Asp-tRNA(Asn) or phospho-Glu-tRNA(Gln). This chain is Aspartyl/glutamyl-tRNA(Asn/Gln) amidotransferase subunit C, found in Nitrosomonas europaea (strain ATCC 19718 / CIP 103999 / KCTC 2705 / NBRC 14298).